The following is a 110-amino-acid chain: Large ribosomal subunit protein uL22 (110 aa).

It belongs to the universal ribosomal protein uL22 family. Part of the 50S ribosomal subunit.

Functionally, this protein binds specifically to 23S rRNA; its binding is stimulated by other ribosomal proteins, e.g. L4, L17, and L20. It is important during the early stages of 50S assembly. It makes multiple contacts with different domains of the 23S rRNA in the assembled 50S subunit and ribosome. Its function is as follows. The globular domain of the protein is located near the polypeptide exit tunnel on the outside of the subunit, while an extended beta-hairpin is found that lines the wall of the exit tunnel in the center of the 70S ribosome. In Methylococcus capsulatus (strain ATCC 33009 / NCIMB 11132 / Bath), this protein is Large ribosomal subunit protein uL22.